The following is a 261-amino-acid chain: tRNA U34 carboxymethyltransferase (261 aa).

Carboxy-S-adenosyl-L-methionine contacts are provided by residues Lys25, Trp39, Lys44, Gly63, 114-115, Tyr135, and Arg250; that span reads VE.

It belongs to the class I-like SAM-binding methyltransferase superfamily. CmoB family. In terms of assembly, homotetramer.

It catalyses the reaction carboxy-S-adenosyl-L-methionine + 5-hydroxyuridine(34) in tRNA = 5-carboxymethoxyuridine(34) in tRNA + S-adenosyl-L-homocysteine + H(+). Functionally, catalyzes carboxymethyl transfer from carboxy-S-adenosyl-L-methionine (Cx-SAM) to 5-hydroxyuridine (ho5U) to form 5-carboxymethoxyuridine (cmo5U) at position 34 in tRNAs. The sequence is that of tRNA U34 carboxymethyltransferase from Helicobacter pylori (strain G27).